A 512-amino-acid chain; its full sequence is tRNA modification GTPase gtpbp3, mitochondrial (512 aa).

Residues 246–434 (GANIAIVGPP…LLNLLKLNLK (189 aa)) form the TrmE-type G domain. GTP contacts are provided by residues 253 to 260 (GPPNAGKS), 300 to 304 (DTAGL), and 375 to 378 (NKSD).

It belongs to the TRAFAC class TrmE-Era-EngA-EngB-Septin-like GTPase superfamily. TrmE GTPase family.

It is found in the mitochondrion. In terms of biological role, GTPase involved in the 5-carboxymethylaminomethyl modification (mnm(5)s(2)U34) of the wobble uridine base in mitochondrial tRNAs. The polypeptide is tRNA modification GTPase gtpbp3, mitochondrial (gtpbp3) (Dictyostelium discoideum (Social amoeba)).